A 225-amino-acid chain; its full sequence is Peptidyl-tRNA hydrolase (225 aa).

Tyrosine 14 lines the tRNA pocket. Histidine 19 serves as the catalytic Proton acceptor. Residues phenylalanine 64, asparagine 66, and asparagine 112 each contribute to the tRNA site. The segment at 187–225 (MQPPKPEKPKGEAKPAAPEAPEAAPDTRSALQRLADRFR) is disordered. The span at 200 to 210 (KPAAPEAPEAA) shows a compositional bias: low complexity.

Belongs to the PTH family. As to quaternary structure, monomer.

Its subcellular location is the cytoplasm. The enzyme catalyses an N-acyl-L-alpha-aminoacyl-tRNA + H2O = an N-acyl-L-amino acid + a tRNA + H(+). Hydrolyzes ribosome-free peptidyl-tRNAs (with 1 or more amino acids incorporated), which drop off the ribosome during protein synthesis, or as a result of ribosome stalling. Its function is as follows. Catalyzes the release of premature peptidyl moieties from peptidyl-tRNA molecules trapped in stalled 50S ribosomal subunits, and thus maintains levels of free tRNAs and 50S ribosomes. This Cereibacter sphaeroides (strain ATCC 17025 / ATH 2.4.3) (Rhodobacter sphaeroides) protein is Peptidyl-tRNA hydrolase.